We begin with the raw amino-acid sequence, 369 residues long: MKRLTVHTAEKAQQYPILIAPDLIKNASLWHLYCSAPHIAIITNETVAPLYLSSLKAALTDKKVIDIILLDGECHKNLATYQHILTTLLEAHLGRDGLLIALGGGVINDITGFVAATYQRGICWITFPTTLLAQVDAAVGGKTGVNHACGKNMIGAFYPPQAVLMDTATLSTLPPREFSAGLAEVIKYALIYDISFLSWLEQHMDAVLRKEKISLENMIMNCCRYKSEIVCADEREQGMRALLNFGHTFGHALETITAYRHWLHGEAVAIGMRMAAELSEMRGLISADEKARVISLLQRAHLPTAIDIQLNCEDIYQTLFLDKKVRAGQLRFVLLSGLGQAHVVDDVTETEIFAVIAASRSENESFARF.

Residues 71-76, 105-109, 129-130, K142, K151, and 169-172 each bind NAD(+); these read DGECHK, GVIND, TT, and TLST. Positions 184, 247, and 264 each coordinate Zn(2+).

It belongs to the sugar phosphate cyclases superfamily. Dehydroquinate synthase family. It depends on Co(2+) as a cofactor. Zn(2+) is required as a cofactor. Requires NAD(+) as cofactor.

The protein localises to the cytoplasm. It catalyses the reaction 7-phospho-2-dehydro-3-deoxy-D-arabino-heptonate = 3-dehydroquinate + phosphate. It functions in the pathway metabolic intermediate biosynthesis; chorismate biosynthesis; chorismate from D-erythrose 4-phosphate and phosphoenolpyruvate: step 2/7. Catalyzes the conversion of 3-deoxy-D-arabino-heptulosonate 7-phosphate (DAHP) to dehydroquinate (DHQ). This is 3-dehydroquinate synthase from Dichelobacter nodosus (strain VCS1703A).